Consider the following 406-residue polypeptide: UPF0754 membrane protein Cyan7425_4067 (406 aa).

A helical transmembrane segment spans residues 381–401; that stretch reads IVTLGGVLGLLIGIAQSVLLL.

This sequence belongs to the UPF0754 family.

Its subcellular location is the cell inner membrane. The chain is UPF0754 membrane protein Cyan7425_4067 from Cyanothece sp. (strain PCC 7425 / ATCC 29141).